A 338-amino-acid chain; its full sequence is Large ribosomal subunit protein uL10 (338 aa).

The disordered stretch occupies residues Ile302–Gly338. Over residues Glu310–Ala329 the composition is skewed to acidic residues.

The protein belongs to the universal ribosomal protein uL10 family. As to quaternary structure, part of the 50S ribosomal subunit. Forms part of the ribosomal stalk which helps the ribosome interact with GTP-bound translation factors. Forms a heptameric L10(L12)2(L12)2(L12)2 complex, where L10 forms an elongated spine to which the L12 dimers bind in a sequential fashion.

Functionally, forms part of the ribosomal stalk, playing a central role in the interaction of the ribosome with GTP-bound translation factors. The protein is Large ribosomal subunit protein uL10 of Thermococcus sibiricus (strain DSM 12597 / MM 739).